The chain runs to 452 residues: MEKIIGLMSRDDWVYTGLLLFSFAASCYVRKLGNNILASGALGFAMALFIIGPRIAYSLGICAIAVGIQAFAPKKKVPFYVFLTTFTYLMFVRFAHYFLPVVEVASHTNVIQLIITLRIIGITFEENDAWLHKNDENATKRYLTRMPTLLEKFAYFYHFCGLFTGPYYTYQMLLDSQNPALQSWDPTPEVTSRFVRLLWSVPAFVITNHYFPLDSLRSDAIWEVSFFTRLVYAALIFVVFKTRVYSAWAIAESICVILGIGIYPAASNPKIIVGPTDLKVFEGLRDKENVEMNSDAIVNLDIPKVEFSDGFRDGMKAWNRSVQTWLALYVHSRVKFMRVETTMLVSAIWHGTYAGYFMSFGVVAMCAILEDVIFKLVPVNPETGLRPQWFRILYTHTIRCRGFEMLATGFLLKNASDVHHFWSSIYYWLPLLCVPFYIYSVKTAAPKLKLVV.

4 consecutive transmembrane segments (helical) span residues 4-24 (IIGL…FSFA), 53-73 (PRIA…AFAP), 79-99 (FYVF…HYFL), and 104-124 (VASH…GITF). An N-linked (GlcNAc...) asparagine glycan is attached at Asn137. 3 helical membrane passes run 153–173 (FAYF…YQML), 220–240 (AIWE…FVVF), and 244–264 (VYSA…GIYP). An N-linked (GlcNAc...) asparagine glycan is attached at Asn319. His350 is an active-site residue. The chain crosses the membrane as a helical span at residues 354-374 (AGYFMSFGVVAMCAILEDVIF). Asn414 carries N-linked (GlcNAc...) asparagine glycosylation. A helical transmembrane segment spans residues 421-441 (FWSSIYYWLPLLCVPFYIYSV).

The protein belongs to the membrane-bound acyltransferase family.

It localises to the membrane. The enzyme catalyses a 1-acyl-sn-glycero-3-phospho-(1D-myo-inositol) + an acyl-CoA = a 1,2-diacyl-sn-glycero-3-phospho-(1D-myo-inositol) + CoA. It carries out the reaction a fatty acyl-[ACP] + a 1-acyl-sn-glycero-3-phosphate = a 1,2-diacyl-sn-glycero-3-phosphate + holo-[ACP]. Its pathway is lipid metabolism; phospholipid metabolism. Functionally, acyltransferase which mediates the conversion of lysophosphatidylinositol (1-acylglycerophosphatidylinositol or LPI) into phosphatidylinositol (1,2-diacyl-sn-glycero-3-phosphoinositol or PI) (LPIAT activity). Prefers arachidonoyl-CoA or eicosapentaenoic acid (EPA) as the acyl donor. Prefers sn-2-LPI rather than sn-1-LPI as the acyl acceptor. Lysophospholipid acyltransferases (LPLATs) catalyze the reacylation step of the phospholipid remodeling pathway also known as the Lands cycle. The polypeptide is Membrane-bound acylglycerophosphatidylinositol O-acyltransferase mboa-7 (Caenorhabditis briggsae).